We begin with the raw amino-acid sequence, 353 residues long: MLFTLIVCLTIISSLATFLLLFGDSPSFRNTPIQKLRNSLLSISRDIFQFYHWLDEKLNGQLLKILNWLVPVGYVMVVTVCFQQFLTHTLPMLSSPGLFRLFTIYFSMVLIYASTILAAFSDPGRITTINLKSYPYTPNQLIFFDGKTCSTCHIAKPARSKHCSVCNQCFLLYDHHCVWINNCVGYYNYKWFMLFLISNINMLGYGGWLCYWALTPVSWRKITSTNNANKVTGIFLILCSIFIVITTLFTFLHLRYIYLGVTTNELDKWSEIDHLVGLGVLYQIEPSIANENYVERAILDGNAVYISLKDERILIYNSNVKNFKLQLIQSVEDDLVNIYDHGFWNNLIERLKW.

A topological domain (lumenal) is located at residue methionine 1. The chain crosses the membrane as a helical span at residues 2–22 (LFTLIVCLTIISSLATFLLLF). The Cytoplasmic portion of the chain corresponds to 23–61 (GDSPSFRNTPIQKLRNSLLSISRDIFQFYHWLDEKLNGQ). Residues 62–82 (LLKILNWLVPVGYVMVVTVCF) traverse the membrane as a helical segment. Residues 83 to 100 (QQFLTHTLPMLSSPGLFR) are Lumenal-facing. A helical transmembrane segment spans residues 101–121 (LFTIYFSMVLIYASTILAAFS). Residues 122-190 (DPGRITTINL…NNCVGYYNYK (69 aa)) are Cytoplasmic-facing. The DHHC domain maps to 147–197 (KTCSTCHIAKPARSKHCSVCNQCFLLYDHHCVWINNCVGYYNYKWFMLFLI). Cysteine 177 (S-palmitoyl cysteine intermediate) is an active-site residue. A helical membrane pass occupies residues 191-211 (WFMLFLISNINMLGYGGWLCY). Residues 212–233 (WALTPVSWRKITSTNNANKVTG) are Lumenal-facing. A helical transmembrane segment spans residues 234–254 (IFLILCSIFIVITTLFTFLHL). The Cytoplasmic segment spans residues 255–353 (RYIYLGVTTN…WNNLIERLKW (99 aa)).

The protein belongs to the DHHC palmitoyltransferase family. SWF1 subfamily.

Its subcellular location is the endoplasmic reticulum membrane. It catalyses the reaction L-cysteinyl-[protein] + hexadecanoyl-CoA = S-hexadecanoyl-L-cysteinyl-[protein] + CoA. Functionally, palmitoyltransferase that targets several endosomal SNAREs. Palmitoylates the SNAREs at cysteine residues close to the cytoplasmic end of their transmembrane domain. May have a role in the cellular quality control of transmembrane domain-containing proteins. This chain is Palmitoyltransferase SWF1 (SWF1), found in Candida albicans (strain SC5314 / ATCC MYA-2876) (Yeast).